Reading from the N-terminus, the 906-residue chain is Protein translocase subunit SecA (906 aa).

ATP contacts are provided by residues glutamine 86, 104–108 (GEGKT), and aspartate 511. Basic and acidic residues-rich tracts occupy residues 853–865 (HESV…RHDE) and 877–888 (VRREGPKVKRND). A disordered region spans residues 853–906 (HESVIDNNQRHDEDEQEEAPKVQQVRREGPKVKRNDPCPCGSGKKYKQCHSKVE). 4 residues coordinate Zn(2+): cysteine 890, cysteine 892, cysteine 901, and histidine 902. The span at 896–906 (KKYKQCHSKVE) shows a compositional bias: basic residues.

The protein belongs to the SecA family. As to quaternary structure, monomer and homodimer. Part of the essential Sec protein translocation apparatus which comprises SecA, SecYEG and auxiliary proteins SecDF-YajC and YidC. Zn(2+) serves as cofactor.

It is found in the cell inner membrane. The protein resides in the cytoplasm. The catalysed reaction is ATP + H2O + cellular proteinSide 1 = ADP + phosphate + cellular proteinSide 2.. Part of the Sec protein translocase complex. Interacts with the SecYEG preprotein conducting channel. Has a central role in coupling the hydrolysis of ATP to the transfer of proteins into and across the cell membrane, serving both as a receptor for the preprotein-SecB complex and as an ATP-driven molecular motor driving the stepwise translocation of polypeptide chains across the membrane. The protein is Protein translocase subunit SecA of Francisella tularensis subsp. tularensis (strain WY96-3418).